The primary structure comprises 377 residues: Probable riboflavin import permease protein RfuC (377 aa).

A run of 10 helical transmembrane segments spans residues 4 to 24 (VINS…VIVL), 49 to 69 (ALFH…CALK), 72 to 92 (MINL…ALLL), 98 to 118 (VGFL…AGIL), 135 to 155 (ITSF…IITV), 182 to 202 (FGVP…GCFF), 223 to 245 (FVGF…LFGL), 249 to 268 (FSVV…GMGY), 274 to 294 (ALIA…FAWM), and 303 to 323 (LGAH…FLLI).

This sequence belongs to the binding-protein-dependent transport system permease family. As to quaternary structure, the complex is probably composed of two ATP-binding proteins (RfuB), two transmembrane proteins (RfuC and RfuD) and a solute-binding protein (RfuA).

It localises to the cell inner membrane. Probably part of the ABC transporter complex RfuABCD involved in riboflavin import. Probably responsible for the translocation of the substrate across the membrane. The chain is Probable riboflavin import permease protein RfuC from Treponema pallidum (strain Nichols).